The primary structure comprises 64 residues: Conotoxin Cal12.4 (64 aa).

Positions 1–21 are cleaved as a signal peptide; that stretch reads MKLTCMLVVLLLVLPFGDLIA.

It belongs to the conotoxin O1 superfamily. Post-translationally, contains 4 disulfide bonds. Expressed by the venom duct.

The protein resides in the secreted. In terms of biological role, probable neurotoxin. The chain is Conotoxin Cal12.4 from Californiconus californicus (California cone).